The following is a 404-amino-acid chain: Phosphoribulokinase, chloroplastic (404 aa).

Residues 1 to 53 (MAFCSPHTTTSLRSPCTTIPNSGFRQNQVIFFTTRSSRRSNTRHGARTFQVSC) constitute a chloroplast transit peptide. A disulfide bridge connects residues Cys69 and Cys108.

Belongs to the phosphoribulokinase family.

The protein resides in the plastid. The protein localises to the chloroplast. It carries out the reaction D-ribulose 5-phosphate + ATP = D-ribulose 1,5-bisphosphate + ADP + H(+). The protein operates within carbohydrate biosynthesis; Calvin cycle. Its activity is regulated as follows. Light regulated via thioredoxin by reversible oxidation/reduction of sulfhydryl/disulfide groups. This Triticum aestivum (Wheat) protein is Phosphoribulokinase, chloroplastic.